Reading from the N-terminus, the 181-residue chain is Inner membrane-spanning protein YciB (181 aa).

Transmembrane regions (helical) follow at residues Leu-10–Ile-30, Met-50–Asp-70, Ile-80–Leu-100, Val-118–Phe-138, and Phe-148–Leu-168.

The protein belongs to the YciB family.

Its subcellular location is the cell inner membrane. Its function is as follows. Plays a role in cell envelope biogenesis, maintenance of cell envelope integrity and membrane homeostasis. The polypeptide is Inner membrane-spanning protein YciB (Shewanella piezotolerans (strain WP3 / JCM 13877)).